The primary structure comprises 348 residues: Sulfate/thiosulfate import ATP-binding protein CysA (348 aa).

One can recognise an ABC transporter domain in the interval 3 to 237 (IRIQELRKQF…PSSPFVYSFV (235 aa)). An ATP-binding site is contributed by 35 to 42 (GPSGSGKT).

This sequence belongs to the ABC transporter superfamily. Sulfate/tungstate importer (TC 3.A.1.6) family. As to quaternary structure, the complex is composed of two ATP-binding proteins (CysA), two transmembrane proteins (CysT and CysW) and a solute-binding protein (CysP).

It is found in the cell inner membrane. It catalyses the reaction sulfate(out) + ATP + H2O = sulfate(in) + ADP + phosphate + H(+). The enzyme catalyses thiosulfate(out) + ATP + H2O = thiosulfate(in) + ADP + phosphate + H(+). Part of the ABC transporter complex CysAWTP involved in sulfate/thiosulfate import. Responsible for energy coupling to the transport system. This is Sulfate/thiosulfate import ATP-binding protein CysA from Xylella fastidiosa (strain Temecula1 / ATCC 700964).